A 293-amino-acid chain; its full sequence is Protein transport protein yif1 (293 aa).

Residues 1–139 (MPPKLYHPQP…PPAEDLNSPD (139 aa)) are Cytoplasmic-facing. A helical membrane pass occupies residues 140-160 (MYIPLMAFTTHILLLCALAGL). Residues 161 to 175 (QDDFQPELFGLRASK) are Lumenal-facing. Residues 176 to 196 (ACAVVLVEFLATRLGCYLLNI) form a helical membrane-spanning segment. Residues 197-201 (SSQSQ) are Cytoplasmic-facing. A helical membrane pass occupies residues 202-222 (VLDLLAFSGYKFVGLILTSLS). Residues 223–226 (KLFE) lie on the Lumenal side of the membrane. The chain crosses the membrane as a helical span at residues 227–247 (MPWVTRFVFLYMYLATAFFLL). Over 248 to 271 (RSLKYAVLPESTMAINATITSHQR) the chain is Cytoplasmic. Residues 272 to 292 (SRRIYFLFFIAASQILFMYVL) traverse the membrane as a helical segment. S293 is a topological domain (lumenal).

The protein belongs to the YIF1 family. In terms of assembly, component of the yip1-yif1 complex, composed of at least yif1, yip1 and yos1. The complex interacts with the ER to Golgi SNAREs bos1 and sec22.

The protein resides in the endoplasmic reticulum membrane. It is found in the golgi apparatus membrane. The protein localises to the cytoplasmic vesicle. It localises to the COPII-coated vesicle. Required for fusion of ER-derived vesicles with the Golgi during ER-to-Golgi protein transport. May be involved in proper membrane localization of Rab GTPases. This Schizosaccharomyces pombe (strain 972 / ATCC 24843) (Fission yeast) protein is Protein transport protein yif1.